Here is a 309-residue protein sequence, read N- to C-terminus: uncharacterized protein (309 aa).

Over residues 1–16 (MAGNSRRRGAVRKAGT) the composition is skewed to basic residues. The segment at 1 to 70 (MAGNSRRRGA…AKRTEETETV (70 aa)) is disordered. Residues G261, I281, and L290 each coordinate S-adenosyl-L-methionine.

This sequence belongs to the class IV-like SAM-binding methyltransferase superfamily. RNA methyltransferase TrmH family.

This is an uncharacterized protein from Mycobacterium avium (strain 104).